Reading from the N-terminus, the 143-residue chain is Transcription antitermination protein NusB (143 aa).

This sequence belongs to the NusB family.

Functionally, involved in transcription antitermination. Required for transcription of ribosomal RNA (rRNA) genes. Binds specifically to the boxA antiterminator sequence of the ribosomal RNA (rrn) operons. The polypeptide is Transcription antitermination protein NusB (Clostridium botulinum (strain ATCC 19397 / Type A)).